Consider the following 160-residue polypeptide: Phosphopantetheine adenylyltransferase (160 aa).

A substrate-binding site is contributed by Ser10. ATP contacts are provided by residues 10-11 (SF) and His18. Residues Lys42, Leu74, and Arg88 each coordinate substrate. Residues 89-91 (GLR), Glu99, and 124-130 (YSFLSSS) contribute to the ATP site.

Belongs to the bacterial CoaD family. In terms of assembly, homohexamer. The cofactor is Mg(2+).

It localises to the cytoplasm. It carries out the reaction (R)-4'-phosphopantetheine + ATP + H(+) = 3'-dephospho-CoA + diphosphate. It functions in the pathway cofactor biosynthesis; coenzyme A biosynthesis; CoA from (R)-pantothenate: step 4/5. Functionally, reversibly transfers an adenylyl group from ATP to 4'-phosphopantetheine, yielding dephospho-CoA (dPCoA) and pyrophosphate. The protein is Phosphopantetheine adenylyltransferase of Bacillus pumilus (strain SAFR-032).